The sequence spans 393 residues: NAD(P)H-quinone oxidoreductase subunit H, chloroplastic (393 aa).

It belongs to the complex I 49 kDa subunit family. As to quaternary structure, NDH is composed of at least 16 different subunits, 5 of which are encoded in the nucleus.

It is found in the plastid. It localises to the chloroplast thylakoid membrane. The enzyme catalyses a plastoquinone + NADH + (n+1) H(+)(in) = a plastoquinol + NAD(+) + n H(+)(out). The catalysed reaction is a plastoquinone + NADPH + (n+1) H(+)(in) = a plastoquinol + NADP(+) + n H(+)(out). Its function is as follows. NDH shuttles electrons from NAD(P)H:plastoquinone, via FMN and iron-sulfur (Fe-S) centers, to quinones in the photosynthetic chain and possibly in a chloroplast respiratory chain. The immediate electron acceptor for the enzyme in this species is believed to be plastoquinone. Couples the redox reaction to proton translocation, and thus conserves the redox energy in a proton gradient. The protein is NAD(P)H-quinone oxidoreductase subunit H, chloroplastic of Solanum bulbocastanum (Wild potato).